We begin with the raw amino-acid sequence, 333 residues long: DNA-directed RNA polymerase subunit alpha (333 aa).

An alpha N-terminal domain (alpha-NTD) region spans residues 1 to 234 (MQISVNEFLT…QQLAAFVDLK (234 aa)). An alpha C-terminal domain (alpha-CTD) region spans residues 248-333 (IDPILLRPVD…SLKKDDKATA (86 aa)).

It belongs to the RNA polymerase alpha chain family. In terms of assembly, homodimer. The RNAP catalytic core consists of 2 alpha, 1 beta, 1 beta' and 1 omega subunit. When a sigma factor is associated with the core the holoenzyme is formed, which can initiate transcription.

The catalysed reaction is RNA(n) + a ribonucleoside 5'-triphosphate = RNA(n+1) + diphosphate. Its function is as follows. DNA-dependent RNA polymerase catalyzes the transcription of DNA into RNA using the four ribonucleoside triphosphates as substrates. The chain is DNA-directed RNA polymerase subunit alpha from Pseudomonas fluorescens (strain Pf0-1).